Consider the following 65-residue polypeptide: Large ribosomal subunit protein bL35 (65 aa).

Positions 28–53 (NGSHNLEKKNRKRTRRLHQSTMLDNA) are disordered. Basic residues predominate over residues 36-45 (KNRKRTRRLH).

Belongs to the bacterial ribosomal protein bL35 family.

The polypeptide is Large ribosomal subunit protein bL35 (Chlorobium luteolum (strain DSM 273 / BCRC 81028 / 2530) (Pelodictyon luteolum)).